The chain runs to 222 residues: DNA-directed RNA polymerase V subunit 5A (222 aa).

Belongs to the archaeal Rpo5/eukaryotic RPB5 RNA polymerase subunit family. As to quaternary structure, component of the RNA polymerase V complex. In terms of tissue distribution, expressed in roots, leaves, siliques and seeds, and to a lower level, in flower buds and flowers.

Its subcellular location is the nucleus. Functionally, DNA-dependent RNA polymerase catalyzes the transcription of DNA into RNA using the four ribonucleoside triphosphates as substrates. Component of RNA polymerase V involved in RNA-directed DNA methylation-dependent (RdDM) silencing of endogenous repeated sequences, including transposable elements. Required for establishment of DNA methylation. The chain is DNA-directed RNA polymerase V subunit 5A (NRPE5A) from Arabidopsis thaliana (Mouse-ear cress).